A 489-amino-acid chain; its full sequence is ITVPSTSSKNLQNSLAFSSSSLSGDKIQTTSFLNRRYCRISSRAPIVVSPKAVSDSKNSQTCLDPEASRSVLGIILGGGAGTRLYPLTKKRAKPAVPLGANYRLIDIPVSNCLNSNISKIYVLTQFNSASLNRHLSRAYASNMGGYKNEGFVEVLAAQQSPENPNWFQGTADAVRQYLWLFEEHNVLEYLILAGDHLYRMDYERFVQAHRETDADITVAALPMDEKRATAFGLMKIDEEGRIIEFAEKPKGEQLKAMKVDTTILGLDDERAKEMPFIASMGIYVISKDVMLNLLREQFPGANDFGSEVIPGATSIGLRVQAYLYDGYWEDIGTIEAFYNANLGITKKPVPDFSFYDRSSPIYTQPRYLPPSKMLDADITDSVIGEGCVIKNCKIHHSVIGLRSCISEGAIIEDTLLMGADYYETDADRKFLAAKGSVPIGIGNARIGDDVKIINSDNVQEAARETDGYFIKSGIVTIIKDAMIPSGTVI.

The N-terminal 52 residues, 1-52 (ITVPSTSSKNLQNSLAFSSSSLSGDKIQTTSFLNRRYCRISSRAPIVVSPKA), are a transit peptide targeting the chloroplast.

The protein belongs to the bacterial/plant glucose-1-phosphate adenylyltransferase family. In terms of assembly, heterotetramer. Prominently expressed in the leaves. A lower level expression is seen in the roots.

It is found in the plastid. Its subcellular location is the chloroplast. The protein localises to the amyloplast. The enzyme catalyses alpha-D-glucose 1-phosphate + ATP + H(+) = ADP-alpha-D-glucose + diphosphate. It functions in the pathway glycan biosynthesis; starch biosynthesis. With respect to regulation, activated by 3'phosphoglycerate, inhibited by orthophosphate. Allosteric regulation. Its function is as follows. This protein plays a role in synthesis of starch. It catalyzes the synthesis of the activated glycosyl donor, ADP-glucose from Glc-1-P and ATP. This chain is Glucose-1-phosphate adenylyltransferase small subunit, chloroplastic/amyloplastic (AGPB1), found in Beta vulgaris (Sugar beet).